We begin with the raw amino-acid sequence, 405 residues long: Diaminopimelate decarboxylase (405 aa).

N6-(pyridoxal phosphate)lysine is present on K46. Residues G225 and 259-262 (EPGR) each bind pyridoxal 5'-phosphate. The substrate site is built by R262, R298, and Y302. C329 functions as the Proton donor in the catalytic mechanism. Substrate-binding residues include E330 and Y358. Y358 contributes to the pyridoxal 5'-phosphate binding site.

It belongs to the Orn/Lys/Arg decarboxylase class-II family. LysA subfamily. Homodimer. Pyridoxal 5'-phosphate is required as a cofactor.

The enzyme catalyses meso-2,6-diaminopimelate + H(+) = L-lysine + CO2. Its pathway is amino-acid biosynthesis; L-lysine biosynthesis via DAP pathway; L-lysine from DL-2,6-diaminopimelate: step 1/1. Specifically catalyzes the decarboxylation of meso-diaminopimelate (meso-DAP) to L-lysine. The protein is Diaminopimelate decarboxylase of Helicobacter pylori (strain ATCC 700392 / 26695) (Campylobacter pylori).